The following is a 478-amino-acid chain: Septin-4 (478 aa).

Positions methionine 1–tyrosine 115 are disordered. Residues serine 28, serine 29, and serine 68 each carry the phosphoserine modification. Positions proline 84–phenylalanine 93 are enriched in polar residues. The segment covering serine 94–proline 108 has biased composition (low complexity). Serine 117 and serine 118 each carry phosphoserine. Positions lysine 141–serine 414 constitute a Septin-type G domain. Residues glycine 151–serine 158 are G1 motif. GTP is bound by residues glycine 151–serine 158 and threonine 185. The G3 motif stretch occupies residues aspartate 208 to glycine 211. The interval alanine 289–aspartate 292 is G4 motif. A GTP-binding site is contributed by lysine 290–glutamate 298. Serine 325 is subject to Phosphoserine. The GTP site is built by glycine 348 and arginine 363. The interval leucine 428 to threonine 449 is disordered. Position 432 is a phosphoserine (serine 432). A Phosphothreonine modification is found at threonine 434. The stretch at proline 447 to histidine 478 forms a coiled coil.

This sequence belongs to the TRAFAC class TrmE-Era-EngA-EngB-Septin-like GTPase superfamily. Septin GTPase family. In terms of assembly, septins polymerize into heterooligomeric protein complexes that form filaments, and can associate with cellular membranes, actin filaments and microtubules. GTPase activity is required for filament formation. Interacts with SEPTIN8. Component of a septin core octameric complex consisting of SEPTIN12, SEPTIN7, SEPTIN6 and SEPTIN2 or SEPTIN4 in the order 12-7-6-2-2-6-7-12 or 12-7-6-4-4-6-7-12. Interacts with SEPTIN14 (via C-terminus). Interacts with DYRK1A. Interacts with SLC6A3/DAT and SNCA/alpha-synuclein. Interacts with STX1A; in the striatum. Interacts with XIAP (via BIR3 domain) following the induction of apoptosis. Interacts with AREL1 (via HECT domain); in the cytoplasm following induction of apoptosis. As to quaternary structure, interacts with DPYSL5. Post-translationally, phosphorylated by DYRK1A. In terms of processing, ubiquitinated by AREL1. May be phosphorylated. Expressed in the cerebral cortex, striatum, midbrain, cerebellum and spinal cord (at protein level). Expressed in the substantia nigra pars compacta, ventral tegmental area, projection fiber bundles and in axon terminals surrounding striatal neurons (at protein level). Expressed in hair follicle stem cells (at protein level). Expressed in small intestinal crypts; abundantly expressed at the crypt base (at protein level). Widely expressed in the brain and to a lesser extent in the testis, lung and liver. In terms of tissue distribution, highly expressed in the brain and testis and, to a lesser extent in the heart, lung and kidney. In the brain, abundant in areas of high cell density, particularly in the stria terminalis. Expressed in the entorhinal, temporal and visual cortices and the hippocampus of the brain where is colocalizes with DYRK1A in postnatal day 1 and adult mice. Expressed and extensively colocalizes with DYRK1A in apical dendrites of pyramidal cells. As to expression, predominantly expressed in embryonic brain and dorsal root ganglion neurons. Expressed in LGR5-positive intestinal stem cells and lysozyme-positive Paneth cells (at protein level). Expressed in the brain and testis.

Its subcellular location is the cytoplasm. The protein localises to the cell projection. The protein resides in the cilium. It localises to the flagellum. It is found in the cytoplasmic vesicle. Its subcellular location is the secretory vesicle. The protein localises to the axon. The protein resides in the dendrite. It localises to the perikaryon. It is found in the synapse. Its subcellular location is the mitochondrion. The protein localises to the cytosol. In terms of biological role, filament-forming cytoskeletal GTPase. Pro-apoptotic protein involved in LGR5-positive intestinal stem cell and Paneth cell expansion in the intestines, via its interaction with XIAP. May also play a role in the regulation of cell fate in the intestine. Positive regulator of apoptosis involved in hematopoietic stem cell homeostasis; via its interaction with XIAP. Negative regulator of repair and hair follicle regeneration in response to injury, due to inhibition of hair follicle stem cell proliferation, potentially via its interaction with XIAP. Plays an important role in male fertility and sperm motility. During spermiogenesis, essential for the establishment of the annulus (a fibrous ring structure connecting the midpiece and the principal piece of the sperm flagellum) which is a requisite for the structural and mechanical integrity of the sperm. Involved in the migration of cortical neurons and the formation of neuron leading processes during embryonic development. Required for dopaminergic metabolism in presynaptic autoreceptors; potentially via activity as a presynaptic scaffold protein. The protein is Septin-4 of Mus musculus (Mouse).